A 498-amino-acid polypeptide reads, in one-letter code: MRTNPTTSSPVVSTLEEKNLGRIAQIIGPVLDVVFPPGKMPNIYNALVVKGRETVGQQINVTCEVQQLLGNNRVRAVAMSATDGLMRGMEVIDTGAPLSVPVGGATLGRIFNVLGEPVDNLGPVDTRTTSPIHRSAPAFIQLDTKLSIFETGIKVVDLLAPYRRGGKIGLFGGAGVGKTVLIMELINNIAKAHGGVSVFGGVGERTREGNDLYMEMKESGVINEKNIAESKVALVYGQMNEPPGARMRVGLTALTMAEYFRDVNEQDVLLFIDNIFRFVQAGSEVSALLGRMPSAVGYQPTLSTEMGSLQERITSTKEGSITSIQAVYVPADDLTDPAPATTFAHLDATTVLSRVLAAKGIYPAVDPLDSTSTMLQPRIVGEEHYETAQRVKQTSQRYKELQDIIAILGLDELSEEDRLTVARARKIERFLSQPFFVAEVFTGSPGKYVGLGETIRGFQLILSGELDGLPEQAFYLVGNIDEATAKAMNLEVESKLKK.

Position 172–179 (G172–T179) interacts with ATP.

It belongs to the ATPase alpha/beta chains family. In terms of assembly, F-type ATPases have 2 components, CF(1) - the catalytic core - and CF(0) - the membrane proton channel. CF(1) has five subunits: alpha(3), beta(3), gamma(1), delta(1), epsilon(1). CF(0) has four main subunits: a(1), b(1), b'(1) and c(9-12).

The protein resides in the plastid. Its subcellular location is the chloroplast thylakoid membrane. The catalysed reaction is ATP + H2O + 4 H(+)(in) = ADP + phosphate + 5 H(+)(out). Functionally, produces ATP from ADP in the presence of a proton gradient across the membrane. The catalytic sites are hosted primarily by the beta subunits. This is ATP synthase subunit beta, chloroplastic from Chamaerops humilis (Mediterranean fan palm).